The following is a 644-amino-acid chain: MFQDNPLLAQLKQQLHSQTPRAEGVVKATEKGFGFLEVDAQKSYFIPPPQMKKVMHGDRIIAVIHSEKERESAEPEELVEPFLTRFVGKVQGKNDRLTIVPDHPLLKDAIPCRAARGLNHEFKEGDWAVAEMRRHPLKGDRSFYAELTQYITFGDDHFVPWWVTLARHNLEKEAPDGVATEMLDEGLVREDLTSLDFVTIDSASTEDMDDALFAKALPDDKLQLIVAIADPTAWIAEGSKLDKAAKIRAFTNYLPGFNIPMLPRELSDDLCSLRANEVRPVLACRMTLSADGTIEDNIEFFAATIESKAKLVYDQVSDWLENTGDWKPESEAIAEQVRLLAQICQRRGEWRHNHALVFKDRPDYRFILGEKGEVLDIVAEPRRIANRIVEEAMIAANICAARVLRDKLGFGIYNVHMGFDPANADALAALLKTHGLHVDAEEVLTLDGFCKLRRELDAQPTGFLDSRIRRFQSFAEISSEPGPHFGLGLEAYATWTSPIRKYGDMINHRLLKAVIKGETATRPQDEITVQMAERRRLNRMAERDVGDWLYARFLKDKAGTGTRFAAEIVDISRGGMRVRLVDNGAIAFIPAPFLHAVRDELVCSQENGTVQIKGETVYKVTDVIDVTIAEVRMETRSIIARPVA.

Residues 189–516 enclose the RNB domain; that stretch reads REDLTSLDFV…NHRLLKAVIK (328 aa). The S1 motif domain occupies 561-643; it reads GTRFAAEIVD…ETRSIIARPV (83 aa).

Belongs to the RNR ribonuclease family. RNase II subfamily.

Its subcellular location is the cytoplasm. The enzyme catalyses Exonucleolytic cleavage in the 3'- to 5'-direction to yield nucleoside 5'-phosphates.. Functionally, involved in mRNA degradation. Hydrolyzes single-stranded polyribonucleotides processively in the 3' to 5' direction. This is Exoribonuclease 2 from Shigella flexneri.